The sequence spans 863 residues: Receptor-like protein Cf-9 (863 aa).

Positions 1 to 21 (MDCVKLVFLMLYTFLCQLALS) are cleaved as a signal peptide. Topologically, residues 22 to 812 (SSLPHLCPED…EEDSPMISWQ (791 aa)) are extracellular. The interval 24–91 (LPHLCPEDQA…GVHCDETTGQ (68 aa)) is N-cap. Asparagine 48, asparagine 72, asparagine 109, asparagine 127, asparagine 142, asparagine 191, asparagine 204, and asparagine 212 each carry an N-linked (GlcNAc...) asparagine glycan. The LRR 1; degenerate repeat unit spans residues 92–115 (VIALDLRCSQLQGKFHSNSSLFQL). LRR repeat units lie at residues 116-139 (SNLK…KFGE) and 141-164 (SNLT…ICHL). An LRR 4; degenerate repeat occupies 165–191 (SKLHVLRICDQYGLSLVPYNFELLLKN). 22 LRR repeats span residues 192 to 214 (LTQL…SNFS), 215 to 238 (SHLT…VFHL), 241 to 263 (LQSL…KWNS), 265 to 287 (ASLM…SFSH), 288 to 312 (LTSL…LWNL), 314 to 335 (NIVF…FTIF), 336 to 358 (EKLK…LSFN), 359 to 382 (TQLE…ISGL), 383 to 406 (QNLE…IFSL), 408 to 428 (SLVE…EFKS), 429 to 452 (KTLS…LLNQ), 454 to 476 (NLQL…ICNL), 477 to 500 (KTLI…VVER), 502 to 524 (EYLS…TFSV), 525 to 549 (GNIL…MINC), 551 to 572 (YLTL…WLGY), 573 to 597 (LFQL…GNTN), 599 to 623 (FMGL…ILGN), 667 to 690 (LDSN…IIGD), 691 to 714 (LVGL…SFQN), 715 to 739 (LSVL…LASL), and 741 to 759 (FLEV…IPKG). Residue asparagine 262 is glycosylated (N-linked (GlcNAc...) asparagine). N-linked (GlcNAc...) asparagine glycosylation is found at asparagine 300 and asparagine 311. Asparagine 378, asparagine 396, and asparagine 416 each carry an N-linked (GlcNAc...) asparagine glycan. Asparagine 464 carries an N-linked (GlcNAc...) asparagine glycan. N-linked (GlcNAc...) asparagine glycosylation is present at asparagine 519. An N-linked (GlcNAc...) asparagine glycan is attached at asparagine 563. Residues asparagine 698 and asparagine 714 are each glycosylated (N-linked (GlcNAc...) asparagine). N-linked (GlcNAc...) asparagine glycosylation is found at asparagine 746 and asparagine 767. Positions 760–812 (KQFDSFGNTSYQGNDGLRGFPLSKLCGGEDQVTTPAELDQEEEEEDSPMISWQ) are C-cap/acidic domain. The helical transmembrane segment at 813 to 833 (GVLVGYGCGLVIGLSVIYIMW) threads the bilayer. Residues 834–863 (STQYPAWFSRMDLKLEHIITTKMKKHKKRY) lie on the Cytoplasmic side of the membrane.

The protein belongs to the RLP family. In terms of assembly, interacts with thioredoxin-like protein CITRX.

The protein resides in the cell membrane. Involved in plant defense. Confers resistance to the fungal pathogen C.fulvum through recognition of the AVR9 elicitor protein. This chain is Receptor-like protein Cf-9, found in Solanum pimpinellifolium (Currant tomato).